We begin with the raw amino-acid sequence, 155 residues long: Protein FAM162A (155 aa).

Positions 77–103 (RFKKEEEIPETISFEMLDAAKNKLRVK) are required for proapoptotic activity. The chain crosses the membrane as a helical span at residues 104–121 (VSYLMIALTVAGCIYMVI).

It belongs to the UPF0389 family. In terms of assembly, interacts with HSP90AB1; HSP90AB1 is essential for FAM162A mitochondrial localization and pro-apoptotic activity. Interacts with VDAC2; the interaction is probably involved in inducing mitochondrial permeability transition.

The protein resides in the mitochondrion membrane. In terms of biological role, proposed to be involved in regulation of apoptosis; the exact mechanism may differ between cell types/tissues. May be involved in hypoxia-induced cell death of transformed cells implicating cytochrome C release and caspase activation (such as CASP9) and inducing mitochondrial permeability transition. May be involved in hypoxia-induced cell death of neuronal cells probably by promoting release of AIFM1 from mitochondria to cytoplasm and its translocation to the nucleus; however, the involvement of caspases has been reported conflictingly. This is Protein FAM162A (Fam162a) from Mus musculus (Mouse).